The chain runs to 258 residues: 4,5-dihydroxyphthalate decarboxylase (258 aa).

This sequence to P.testosteroni DHP decarboxylase.

It catalyses the reaction 4,5-dihydroxyphthalate + H(+) = 3,4-dihydroxybenzoate + CO2. The protein operates within xenobiotic degradation; phthalate degradation; 3,4-dihydroxybenzoate from phthalate: step 3/3. The sequence is that of 4,5-dihydroxyphthalate decarboxylase (pht5) from Pseudomonas putida (Arthrobacter siderocapsulatus).